The sequence spans 139 residues: I-Kappa-B like protein N1 (139 aa).

ANK repeat units follow at residues 16-48 (NGENLLHAMCRHGNSLALSIIAQSINKNYQYLL), 54-87 (EGRKCIHIAAVMHKGQVATELIIILLNFGADVNG), and 92-122 (TGDTVLHIAVYLKDYYLAEWLCRRSGININA).

The protein belongs to the polydnaviridae I-Kappa-B-like protein family.

Its function is as follows. Suppresses the host immune response through NF-kappa-B inactivation. Possesses ankyrin repeat domain required for NF-kappa-B binding but lack the regulatory regions required for dissociation from NF-kappa-B and degradation. Therefore, prevents host NF-kappa-B release and subsequent activation. This chain is I-Kappa-B like protein N1 (N2), found in Microplitis demolitor bracovirus (isolate Webb) (MdBV).